The following is a 73-amino-acid chain: uncharacterized protein (73 aa).

The signal sequence occupies residues 1–28; the sequence is MKFLLSVIAGLLILALYLFWKVQPPVWI.

This is an uncharacterized protein from Bacillus subtilis (strain 168).